Here is a 123-residue protein sequence, read N- to C-terminus: Thioredoxin H-type (123 aa).

The Thioredoxin domain maps to 2–119 (AATAELIPAG…IEAKLLKHSQ (118 aa)). Cys45 and Cys48 are disulfide-bonded.

Belongs to the thioredoxin family. Plant H-type subfamily.

The protein localises to the cytoplasm. Its function is as follows. Participates in various redox reactions through the reversible oxidation of the active center dithiol to a disulfide. The H form is known to activate a number of cytosolic enzymes. This chain is Thioredoxin H-type (PEC-2), found in Brassica campestris (Field mustard).